Consider the following 469-residue polypeptide: Cell division protein FtsP (469 aa).

Positions 1 to 27 form a signal peptide, tat-type signal; that stretch reads MKLSRRQFLQRSTLAGVATVTPTSLWA.

The protein belongs to the FtsP family. In terms of processing, predicted to be exported by the Tat system. The position of the signal peptide cleavage has not been experimentally proven.

It localises to the periplasm. Its function is as follows. Cell division protein that is required for growth during stress conditions. May be involved in protecting or stabilizing the divisomal assembly under conditions of stress. In Glaesserella parasuis serovar 5 (strain SH0165) (Haemophilus parasuis), this protein is Cell division protein FtsP.